We begin with the raw amino-acid sequence, 430 residues long: Serine--tRNA ligase (430 aa).

Threonine 235 to glutamate 237 contacts L-serine. Arginine 266–glutamate 268 serves as a coordination point for ATP. Residue glutamate 289 participates in L-serine binding. Glutamate 353 to serine 356 provides a ligand contact to ATP. Serine 388 provides a ligand contact to L-serine.

The protein belongs to the class-II aminoacyl-tRNA synthetase family. Type-1 seryl-tRNA synthetase subfamily. Homodimer. The tRNA molecule binds across the dimer.

The protein localises to the cytoplasm. The catalysed reaction is tRNA(Ser) + L-serine + ATP = L-seryl-tRNA(Ser) + AMP + diphosphate + H(+). The enzyme catalyses tRNA(Sec) + L-serine + ATP = L-seryl-tRNA(Sec) + AMP + diphosphate + H(+). Its pathway is aminoacyl-tRNA biosynthesis; selenocysteinyl-tRNA(Sec) biosynthesis; L-seryl-tRNA(Sec) from L-serine and tRNA(Sec): step 1/1. Its function is as follows. Catalyzes the attachment of serine to tRNA(Ser). Is also able to aminoacylate tRNA(Sec) with serine, to form the misacylated tRNA L-seryl-tRNA(Sec), which will be further converted into selenocysteinyl-tRNA(Sec). The sequence is that of Serine--tRNA ligase from Azoarcus sp. (strain BH72).